The sequence spans 371 residues: Putative glutamate--cysteine ligase 2 (371 aa).

It belongs to the glutamate--cysteine ligase type 2 family. YbdK subfamily. Homodimer.

It carries out the reaction L-cysteine + L-glutamate + ATP = gamma-L-glutamyl-L-cysteine + ADP + phosphate + H(+). In terms of biological role, ATP-dependent carboxylate-amine ligase which exhibits weak glutamate--cysteine ligase activity. The chain is Putative glutamate--cysteine ligase 2 from Cronobacter sakazakii (strain ATCC BAA-894) (Enterobacter sakazakii).